The chain runs to 237 residues: Proteasome subunit alpha (237 aa).

The protein belongs to the peptidase T1A family. The 20S proteasome core is composed of 14 alpha and 14 beta subunits that assemble into four stacked heptameric rings, resulting in a barrel-shaped structure. The two inner rings, each composed of seven catalytic beta subunits, are sandwiched by two outer rings, each composed of seven alpha subunits. The catalytic chamber with the active sites is on the inside of the barrel. Has a gated structure, the ends of the cylinder being occluded by the N-termini of the alpha-subunits. Is capped by the proteasome-associated ATPase, ARC.

The protein resides in the cytoplasm. The protein operates within protein degradation; proteasomal Pup-dependent pathway. Its activity is regulated as follows. The formation of the proteasomal ATPase ARC-20S proteasome complex, likely via the docking of the C-termini of ARC into the intersubunit pockets in the alpha-rings, may trigger opening of the gate for substrate entry. Interconversion between the open-gate and close-gate conformations leads to a dynamic regulation of the 20S proteasome proteolysis activity. Functionally, component of the proteasome core, a large protease complex with broad specificity involved in protein degradation. This is Proteasome subunit alpha from Kineococcus radiotolerans (strain ATCC BAA-149 / DSM 14245 / SRS30216).